We begin with the raw amino-acid sequence, 402 residues long: Cysteine desulfurase NifS (402 aa).

Residues 72–73 (GT), asparagine 151, glutamine 179, and 199–201 (CGH) each bind pyridoxal 5'-phosphate. Lysine 202 bears the N6-(pyridoxal phosphate)lysine mark. Pyridoxal 5'-phosphate is bound at residue threonine 237. Cysteine 325 (cysteine persulfide intermediate) is an active-site residue. Cysteine 325 lines the [2Fe-2S] cluster pocket.

Belongs to the class-V pyridoxal-phosphate-dependent aminotransferase family. NifS/IscS subfamily. In terms of assembly, homodimer. Requires pyridoxal 5'-phosphate as cofactor.

The catalysed reaction is (sulfur carrier)-H + L-cysteine = (sulfur carrier)-SH + L-alanine. Inhibited by equimolar concentrations of p-chloromercuribenzoic acid, iodoacetamide or N-ethylmaleimide. In terms of biological role, catalyzes the removal of elemental sulfur atoms from cysteine to produce alanine. Seems to participate in the biosynthesis of the nitrogenase metalloclusters by providing the inorganic sulfur required for the Fe-S core formation. This chain is Cysteine desulfurase NifS, found in Azotobacter vinelandii.